The following is a 353-amino-acid chain: Methionine import ATP-binding protein MetN (353 aa).

The 244-residue stretch at 6–249 folds into the ABC transporter domain; that stretch reads LKNVDVDFPQ…PKQELTKKFV (244 aa). 41-48 provides a ligand contact to ATP; it reads GFSGAGKS.

This sequence belongs to the ABC transporter superfamily. Methionine importer (TC 3.A.1.24) family. In terms of assembly, the complex is composed of two ATP-binding proteins (MetN), two transmembrane proteins (MetI) and a solute-binding protein (MetQ).

The protein localises to the cell membrane. It catalyses the reaction L-methionine(out) + ATP + H2O = L-methionine(in) + ADP + phosphate + H(+). The enzyme catalyses D-methionine(out) + ATP + H2O = D-methionine(in) + ADP + phosphate + H(+). Functionally, part of the ABC transporter complex MetNIQ involved in methionine import. Responsible for energy coupling to the transport system. This is Methionine import ATP-binding protein MetN from Lactobacillus acidophilus (strain ATCC 700396 / NCK56 / N2 / NCFM).